Consider the following 416-residue polypeptide: Adenylosuccinate synthetase (416 aa).

GTP-binding positions include 12 to 18 (GDEGKGK) and 40 to 42 (GHT). Asp-13 acts as the Proton acceptor in catalysis. Residues Asp-13 and Gly-40 each contribute to the Mg(2+) site. Residues 13–16 (DEGK), 38–41 (NAGH), Thr-125, Arg-139, Gln-219, Thr-234, and Arg-298 contribute to the IMP site. The Proton donor role is filled by His-41. Residue 294-300 (TVTGRKR) coordinates substrate. GTP contacts are provided by residues Arg-300, 326–328 (KLD), and 404–406 (STS).

It belongs to the adenylosuccinate synthetase family. Homodimer. It depends on Mg(2+) as a cofactor.

The protein localises to the cytoplasm. It catalyses the reaction IMP + L-aspartate + GTP = N(6)-(1,2-dicarboxyethyl)-AMP + GDP + phosphate + 2 H(+). It participates in purine metabolism; AMP biosynthesis via de novo pathway; AMP from IMP: step 1/2. Plays an important role in the de novo pathway of purine nucleotide biosynthesis. Catalyzes the first committed step in the biosynthesis of AMP from IMP. The sequence is that of Adenylosuccinate synthetase from Aliarcobacter butzleri (strain RM4018) (Arcobacter butzleri).